Consider the following 144-residue polypeptide: Large ribosomal subunit protein uL22 (144 aa).

Positions 1–38 (MAETQTTKKGAKRVRQPVPARRSKPNRPAKAAPGPHAS) are disordered. A compositionally biased stretch (basic residues) spans 9 to 27 (KGAKRVRQPVPARRSKPNR).

Belongs to the universal ribosomal protein uL22 family. In terms of assembly, part of the 50S ribosomal subunit.

Functionally, this protein binds specifically to 23S rRNA; its binding is stimulated by other ribosomal proteins, e.g. L4, L17, and L20. It is important during the early stages of 50S assembly. It makes multiple contacts with different domains of the 23S rRNA in the assembled 50S subunit and ribosome. Its function is as follows. The globular domain of the protein is located near the polypeptide exit tunnel on the outside of the subunit, while an extended beta-hairpin is found that lines the wall of the exit tunnel in the center of the 70S ribosome. This chain is Large ribosomal subunit protein uL22, found in Anaeromyxobacter sp. (strain Fw109-5).